A 129-amino-acid chain; its full sequence is Intraflagellar transport protein 20 homolog (129 aa).

A coiled-coil region spans residues 89–121; the sequence is VLLQMTIRELTVEKERLRVELEAVRKIEKEQDE.

Component of the IFT complex B composed of at least che-2, che-13, dyf-1, dyf-3, dyf-6, dyf-11, dyf-13, ift-20, ift-74, ift-81, ifta-2, osm-1, osm-5 and osm-6.

The protein resides in the cell projection. The protein localises to the cilium. In terms of biological role, component of the intraflagellar transport (IFT) complex B required for transport of proteins in the motile cilium. Required for ciliary entrance and transport of specific ciliary cargo proteins such as che-3 which are related to motility. In Caenorhabditis elegans, this protein is Intraflagellar transport protein 20 homolog.